Here is a 206-residue protein sequence, read N- to C-terminus: MDEFVSLVIGYFLGNILFAMIVTKIFLHKDPTKYGSGNPGTANVGAVFGKKWGILTCIGDLAKTLAALLIVYFIYHGNRLDLSFAGLGVVLGHSFPFWNHFKGGKGVAVTALWIVFFDWRAGLIALLIGLFLVIIMKNLTIPPLVYMLGFSIFTWINFGWEQGLIFLIATLIMIFQFRKDIVDFFTGKGKRVDVLVTIKKKLGIYK.

5 helical membrane passes run 7-27 (LVIG…KIFL), 54-74 (ILTC…VYFI), 81-101 (DLSF…WNHF), 114-134 (IVFF…FLVI), and 155-175 (WINF…IMIF).

Belongs to the PlsY family. As to quaternary structure, probably interacts with PlsX.

Its subcellular location is the cell membrane. The catalysed reaction is an acyl phosphate + sn-glycerol 3-phosphate = a 1-acyl-sn-glycero-3-phosphate + phosphate. It functions in the pathway lipid metabolism; phospholipid metabolism. Catalyzes the transfer of an acyl group from acyl-phosphate (acyl-PO(4)) to glycerol-3-phosphate (G3P) to form lysophosphatidic acid (LPA). This enzyme utilizes acyl-phosphate as fatty acyl donor, but not acyl-CoA or acyl-ACP. This Lactobacillus johnsonii (strain CNCM I-12250 / La1 / NCC 533) protein is Glycerol-3-phosphate acyltransferase 1.